The following is a 239-amino-acid chain: MTINALLLSSSRVGDTPYLAHAIPFIKPLTTNARKWIFIPYAGVSMSYDTYLASVVTGLSGLELDISGIHQHPDPQQAIKDADGILIGGGNTFHLLHQLYRYDLVTLIGEQVALGKPYIGWSAGSNVSGLSIRTTNDMPIIEPPSFNALNLVPFQLNPHYSNYQAPGHNGETRAQRLLEFTKVDPLTPVVGIVEGSALWRQGDKLSLLGNQPAYLFCGEQQEIPIPVGSDLSNLLKPSL.

Residues Ser122, Asp137, and His159 each act as charge relay system in the active site.

This sequence belongs to the peptidase S51 family.

The protein resides in the cytoplasm. It catalyses the reaction Dipeptidase E catalyzes the hydrolysis of dipeptides Asp-|-Xaa. It does not act on peptides with N-terminal Glu, Asn or Gln, nor does it cleave isoaspartyl peptides.. Functionally, hydrolyzes dipeptides containing N-terminal aspartate residues. May play a role in allowing the cell to use peptide aspartate to spare carbon otherwise required for the synthesis of the aspartate family of amino acids. The chain is Peptidase E from Shewanella baltica (strain OS195).